Reading from the N-terminus, the 230-residue chain is 8-demethylnovobiocic acid C(8)-methyltransferase (230 aa).

Belongs to the methyltransferase superfamily.

It catalyses the reaction 8-desmethylnovobiocic acid + S-adenosyl-L-methionine = novobiocic acid + S-adenosyl-L-homocysteine + H(+). It functions in the pathway antibiotic biosynthesis; novobiocin biosynthesis. Its function is as follows. C-methyltransferase that methylates 8-demethylnovobiocic acid to produce novobiocic acid in the novobiocin biosynthesis pathway. Novobiocin is an aminocoumarin family antibiotic that targets bacterial DNA gyrases. The protein is 8-demethylnovobiocic acid C(8)-methyltransferase (novO) of Streptomyces niveus (Streptomyces spheroides).